Here is a 456-residue protein sequence, read N- to C-terminus: Exodeoxyribonuclease 7 large subunit (456 aa).

The protein belongs to the XseA family. Heterooligomer composed of large and small subunits.

The protein localises to the cytoplasm. The enzyme catalyses Exonucleolytic cleavage in either 5'- to 3'- or 3'- to 5'-direction to yield nucleoside 5'-phosphates.. Its function is as follows. Bidirectionally degrades single-stranded DNA into large acid-insoluble oligonucleotides, which are then degraded further into small acid-soluble oligonucleotides. In Shigella boydii serotype 4 (strain Sb227), this protein is Exodeoxyribonuclease 7 large subunit.